The sequence spans 361 residues: Phosphoserine aminotransferase (361 aa).

Residue Arg-43 coordinates L-glutamate. Residues 77–78, Trp-103, Thr-153, Asp-173, and Gln-196 contribute to the pyridoxal 5'-phosphate site; that span reads AS. N6-(pyridoxal phosphate)lysine is present on Lys-197. 238 to 239 contacts pyridoxal 5'-phosphate; that stretch reads NT.

The protein belongs to the class-V pyridoxal-phosphate-dependent aminotransferase family. SerC subfamily. As to quaternary structure, homodimer. It depends on pyridoxal 5'-phosphate as a cofactor.

The protein localises to the cytoplasm. The catalysed reaction is O-phospho-L-serine + 2-oxoglutarate = 3-phosphooxypyruvate + L-glutamate. It catalyses the reaction 4-(phosphooxy)-L-threonine + 2-oxoglutarate = (R)-3-hydroxy-2-oxo-4-phosphooxybutanoate + L-glutamate. It functions in the pathway amino-acid biosynthesis; L-serine biosynthesis; L-serine from 3-phospho-D-glycerate: step 2/3. It participates in cofactor biosynthesis; pyridoxine 5'-phosphate biosynthesis; pyridoxine 5'-phosphate from D-erythrose 4-phosphate: step 3/5. In terms of biological role, catalyzes the reversible conversion of 3-phosphohydroxypyruvate to phosphoserine and of 3-hydroxy-2-oxo-4-phosphonooxybutanoate to phosphohydroxythreonine. The chain is Phosphoserine aminotransferase from Azotobacter vinelandii (strain DJ / ATCC BAA-1303).